The primary structure comprises 62 residues: Sauvatide (62 aa).

The signal sequence occupies residues 1 to 24; sequence MDILKKSLFLILFLGLVSISFCDG. Positions 25–46 are excised as a propeptide; sequence EKRQDDDEANESEEKKEIHEVE. A Lysine amide modification is found at lysine 58.

Expressed by the skin glands.

It localises to the secreted. Functionally, induces contraction of smooth muscle in isolated rat urinary bladder with an EC(50) value of 2.2nM. This chain is Sauvatide, found in Phyllomedusa sauvagei (Sauvage's leaf frog).